We begin with the raw amino-acid sequence, 42 residues long: MADIGTTGRIPLWLVGTVAGTAAIGLLGIFFYGSYVGLGSSL.

The chain crosses the membrane as a helical span at residues 10–30 (IPLWLVGTVAGTAAIGLLGIF).

Belongs to the PsbJ family. In terms of assembly, PSII is composed of 1 copy each of membrane proteins PsbA, PsbB, PsbC, PsbD, PsbE, PsbF, PsbH, PsbI, PsbJ, PsbK, PsbL, PsbM, PsbT, PsbX, PsbY, PsbZ, Psb30/Ycf12, at least 3 peripheral proteins of the oxygen-evolving complex and a large number of cofactors. It forms dimeric complexes.

The protein localises to the plastid. It localises to the chloroplast thylakoid membrane. Functionally, one of the components of the core complex of photosystem II (PSII). PSII is a light-driven water:plastoquinone oxidoreductase that uses light energy to abstract electrons from H(2)O, generating O(2) and a proton gradient subsequently used for ATP formation. It consists of a core antenna complex that captures photons, and an electron transfer chain that converts photonic excitation into a charge separation. In Pleurastrum terricola (Filamentous green alga), this protein is Photosystem II reaction center protein J.